The chain runs to 309 residues: Uricase-2 isozyme 1 (309 aa).

Residues K18 and T64 each act as charge relay system in the active site. The urate site is built by T64, D65, F166, R183, V238, Q239, and N265. The active-site Charge relay system is H267. The Microbody targeting signal motif lies at 307-309 (SKL).

The protein belongs to the uricase family. As to quaternary structure, homotetramer. The N-terminus is blocked. As to expression, expressed predominantly in the uninfected cells of the central tissue of the root nodule.

It is found in the peroxisome. It catalyses the reaction urate + O2 + H2O = 5-hydroxyisourate + H2O2. Its pathway is purine metabolism; urate degradation; (S)-allantoin from urate: step 1/3. In terms of biological role, catalyzes the oxidation of uric acid to 5-hydroxyisourate, which is further processed to form (S)-allantoin. This chain is Uricase-2 isozyme 1, found in Glycine max (Soybean).